A 71-amino-acid polypeptide reads, in one-letter code: uncharacterized protein (71 aa).

The chain crosses the membrane as a helical span at residues 37-57 (IGVGVSDGVSAGVGVGVAMII).

The protein localises to the membrane. This is an uncharacterized protein from Dictyostelium discoideum (Social amoeba).